Here is an 840-residue protein sequence, read N- to C-terminus: Probable alpha-glucuronidase A (840 aa).

The first 19 residues, Met-1–Ala-19, serve as a signal peptide directing secretion. 13 N-linked (GlcNAc...) asparagine glycosylation sites follow: Asn-50, Asn-149, Asn-222, Asn-262, Asn-279, Asn-310, Asn-465, Asn-527, Asn-576, Asn-610, Asn-682, Asn-723, and Asn-732.

Belongs to the glycosyl hydrolase 67 family.

It is found in the secreted. It carries out the reaction an alpha-D-glucuronoside + H2O = D-glucuronate + an alcohol. Alpha-glucuronidase involved in the hydrolysis of xylan, a major structural heterogeneous polysaccharide found in plant biomass representing the second most abundant polysaccharide in the biosphere, after cellulose. Releases 4-O-methylglucuronic acid from xylan. The sequence is that of Probable alpha-glucuronidase A (aguA) from Aspergillus fumigatus (strain ATCC MYA-4609 / CBS 101355 / FGSC A1100 / Af293) (Neosartorya fumigata).